The chain runs to 248 residues: NAD(P)H-quinone oxidoreductase subunit K (248 aa).

[4Fe-4S] cluster-binding residues include Cys66, Cys67, Cys131, and Cys162.

It belongs to the complex I 20 kDa subunit family. NDH-1 can be composed of about 15 different subunits; different subcomplexes with different compositions have been identified which probably have different functions. It depends on [4Fe-4S] cluster as a cofactor.

The protein resides in the cellular thylakoid membrane. The catalysed reaction is a plastoquinone + NADH + (n+1) H(+)(in) = a plastoquinol + NAD(+) + n H(+)(out). It catalyses the reaction a plastoquinone + NADPH + (n+1) H(+)(in) = a plastoquinol + NADP(+) + n H(+)(out). In terms of biological role, NDH-1 shuttles electrons from an unknown electron donor, via FMN and iron-sulfur (Fe-S) centers, to quinones in the respiratory and/or the photosynthetic chain. The immediate electron acceptor for the enzyme in this species is believed to be plastoquinone. Couples the redox reaction to proton translocation, and thus conserves the redox energy in a proton gradient. Cyanobacterial NDH-1 also plays a role in inorganic carbon-concentration. The chain is NAD(P)H-quinone oxidoreductase subunit K from Synechococcus sp. (strain WH7803).